A 163-amino-acid chain; its full sequence is 2-amino-4-hydroxy-6-hydroxymethyldihydropteridine pyrophosphokinase (163 aa).

Belongs to the HPPK family.

It carries out the reaction 6-hydroxymethyl-7,8-dihydropterin + ATP = (7,8-dihydropterin-6-yl)methyl diphosphate + AMP + H(+). Its pathway is cofactor biosynthesis; tetrahydrofolate biosynthesis; 2-amino-4-hydroxy-6-hydroxymethyl-7,8-dihydropteridine diphosphate from 7,8-dihydroneopterin triphosphate: step 4/4. Catalyzes the transfer of pyrophosphate from adenosine triphosphate (ATP) to 6-hydroxymethyl-7,8-dihydropterin, an enzymatic step in folate biosynthesis pathway. The sequence is that of 2-amino-4-hydroxy-6-hydroxymethyldihydropteridine pyrophosphokinase (folK) from Helicobacter pylori (strain ATCC 700392 / 26695) (Campylobacter pylori).